Reading from the N-terminus, the 135-residue chain is ATP synthase epsilon chain (135 aa).

A disordered region spans residues 91-122 (EAQKQLSEAEQAWSKFDGQPNSPDKIKAQQAF).

The protein belongs to the ATPase epsilon chain family. As to quaternary structure, F-type ATPases have 2 components, CF(1) - the catalytic core - and CF(0) - the membrane proton channel. CF(1) has five subunits: alpha(3), beta(3), gamma(1), delta(1), epsilon(1). CF(0) has three main subunits: a, b and c.

It localises to the cellular thylakoid membrane. Functionally, produces ATP from ADP in the presence of a proton gradient across the membrane. The polypeptide is ATP synthase epsilon chain (Synechococcus sp. (strain RCC307)).